An 864-amino-acid polypeptide reads, in one-letter code: Leucine--tRNA ligase (864 aa).

The 'HIGH' region signature appears at 42–52 (PYPSGKLHMGH). The short motif at 624-628 (KMSKS) is the 'KMSKS' region element. Position 627 (Lys-627) interacts with ATP.

Belongs to the class-I aminoacyl-tRNA synthetase family.

Its subcellular location is the cytoplasm. The catalysed reaction is tRNA(Leu) + L-leucine + ATP = L-leucyl-tRNA(Leu) + AMP + diphosphate. In Burkholderia lata (strain ATCC 17760 / DSM 23089 / LMG 22485 / NCIMB 9086 / R18194 / 383), this protein is Leucine--tRNA ligase.